The primary structure comprises 569 residues: Myotubularin-related protein 9 (569 aa).

Positions 134–513 (GWSAFDLEQE…QCIKIWDRLF (380 aa)) constitute a Myotubularin phosphatase domain.

This sequence belongs to the protein-tyrosine phosphatase family. Non-receptor class myotubularin subfamily. As to quaternary structure, heterodimer with lipid phosphatase mtm-6.

The protein localises to the cytoplasm. The protein resides in the membrane. Its function is as follows. May act as a regulatory subunit for mtm-6. In association with phosphatase mtm-6, plays a role in endosome trafficking probably by regulating phosphatidylinositol-3-phosphate levels. Regulates fluid phase endocytosis in coelomocytes. Regulates posterior migration of QL neuroblast descendants and the anterior migration of QR neuroblast descendants and HSN neurons during larval development probably by controlling Wnt ligand secretion through the regulation of sorting receptor mig-14 trafficking. Involved in the formation of correct synapse number in DA9 motor neurons. This is Myotubularin-related protein 9 from Caenorhabditis elegans.